The sequence spans 248 residues: PF03932 family protein CutC (248 aa).

It belongs to the CutC family. Homodimer.

Its subcellular location is the cytoplasm. The sequence is that of PF03932 family protein CutC from Escherichia coli O157:H7.